We begin with the raw amino-acid sequence, 378 residues long: Acetylornithine deacetylase (378 aa).

Histidine 76 contributes to the Zn(2+) binding site. The active site involves aspartate 78. Zn(2+) is bound at residue aspartate 108. Glutamate 140 is an active-site residue. Zn(2+)-binding residues include glutamate 141, glutamate 165, and histidine 351.

This sequence belongs to the peptidase M20A family. ArgE subfamily. In terms of assembly, homodimer. Zn(2+) serves as cofactor. Requires Co(2+) as cofactor. The cofactor is glutathione.

The protein localises to the cytoplasm. It carries out the reaction N(2)-acetyl-L-ornithine + H2O = L-ornithine + acetate. The protein operates within amino-acid biosynthesis; L-arginine biosynthesis; L-ornithine from N(2)-acetyl-L-ornithine (linear): step 1/1. Catalyzes the hydrolysis of the amide bond of N(2)-acetylated L-amino acids. Cleaves the acetyl group from N-acetyl-L-ornithine to form L-ornithine, an intermediate in L-arginine biosynthesis pathway, and a branchpoint in the synthesis of polyamines. This Aliivibrio salmonicida (strain LFI1238) (Vibrio salmonicida (strain LFI1238)) protein is Acetylornithine deacetylase.